The following is a 724-amino-acid chain: Degenerin mec-10 (724 aa).

The Cytoplasmic segment spans residues 1–125; the sequence is MNRGPPNPRM…GQAPNSLYRA (125 aa). The chain crosses the membrane as a helical span at residues 126–146; the sequence is VWVFLLLICAIQFINQAVAVI. The Extracellular segment spans residues 147–684; the sequence is QKYQKMDKIT…FGGHLGLWSG (538 aa). 5 N-linked (GlcNAc...) asparagine glycosylation sites follow: Asn-294, Asn-370, Asn-463, Asn-605, and Asn-624. Residues 685-705 form a helical membrane-spanning segment; sequence VSVMTCCEFVCLVLELLYMAV. Topologically, residues 706-724 are cytoplasmic; that stretch reads THHITQERIRRRENAANEF.

It belongs to the amiloride-sensitive sodium channel (TC 1.A.6) family. In terms of assembly, the channel is probably composed of at least the mec-2, mec-4, mec-6 and mec-10 subunits.

The protein localises to the cell membrane. In terms of biological role, amiloride-sensitive sodium channel subunit required for mechanosensory transduction (touch sensitivity). Negatively regulates the turning step of male mating behavior. The sequence is that of Degenerin mec-10 from Caenorhabditis briggsae.